The sequence spans 654 residues: Macrolide export ATP-binding/permease protein MacB (654 aa).

The ABC transporter domain maps to 6–244; it reads IELRGLRREF…RAGDAPTRQP (239 aa). Residue 42-49 participates in ATP binding; that stretch reads GASGSGKS. 4 helical membrane-spanning segments follow: residues 278-298, 527-547, 584-604, and 619-639; these read FLTM…VAVG, LTLM…IGVM, VVCL…AALF, and SIAA…YLPA.

The protein belongs to the ABC transporter superfamily. Macrolide exporter (TC 3.A.1.122) family. Homodimer.

Its subcellular location is the cell inner membrane. Functionally, non-canonical ABC transporter that contains transmembrane domains (TMD), which form a pore in the inner membrane, and an ATP-binding domain (NBD), which is responsible for energy generation. Confers resistance against macrolides. This Rhodopseudomonas palustris (strain HaA2) protein is Macrolide export ATP-binding/permease protein MacB.